The primary structure comprises 454 residues: Bifunctional protein GlmU (454 aa).

The segment at 1–226 (MSLEIVILAA…AMEVQGVNDR (226 aa)) is pyrophosphorylase. Residues 8 to 11 (LAAG), Lys22, Gln73, 78 to 79 (GT), 99 to 101 (YGD), Gly136, Glu151, Asn166, and Asn224 contribute to the UDP-N-acetyl-alpha-D-glucosamine site. Asp101 lines the Mg(2+) pocket. Asn224 provides a ligand contact to Mg(2+). The linker stretch occupies residues 227-247 (MQQAQLERHYQRLRAEELMRQ). The segment at 248-454 (GVTLLDPQRL…NWKRPEKIKK (207 aa)) is N-acetyltransferase. Residues Arg330 and Lys348 each contribute to the UDP-N-acetyl-alpha-D-glucosamine site. His360 acts as the Proton acceptor in catalysis. UDP-N-acetyl-alpha-D-glucosamine is bound by residues Tyr363 and Asn374. Residues Ala377, 383-384 (NY), Ser402, Ala420, and Arg437 each bind acetyl-CoA.

This sequence in the N-terminal section; belongs to the N-acetylglucosamine-1-phosphate uridyltransferase family. In the C-terminal section; belongs to the transferase hexapeptide repeat family. Homotrimer. It depends on Mg(2+) as a cofactor.

It localises to the cytoplasm. It catalyses the reaction alpha-D-glucosamine 1-phosphate + acetyl-CoA = N-acetyl-alpha-D-glucosamine 1-phosphate + CoA + H(+). The enzyme catalyses N-acetyl-alpha-D-glucosamine 1-phosphate + UTP + H(+) = UDP-N-acetyl-alpha-D-glucosamine + diphosphate. Its pathway is nucleotide-sugar biosynthesis; UDP-N-acetyl-alpha-D-glucosamine biosynthesis; N-acetyl-alpha-D-glucosamine 1-phosphate from alpha-D-glucosamine 6-phosphate (route II): step 2/2. The protein operates within nucleotide-sugar biosynthesis; UDP-N-acetyl-alpha-D-glucosamine biosynthesis; UDP-N-acetyl-alpha-D-glucosamine from N-acetyl-alpha-D-glucosamine 1-phosphate: step 1/1. It participates in bacterial outer membrane biogenesis; LPS lipid A biosynthesis. Functionally, catalyzes the last two sequential reactions in the de novo biosynthetic pathway for UDP-N-acetylglucosamine (UDP-GlcNAc). The C-terminal domain catalyzes the transfer of acetyl group from acetyl coenzyme A to glucosamine-1-phosphate (GlcN-1-P) to produce N-acetylglucosamine-1-phosphate (GlcNAc-1-P), which is converted into UDP-GlcNAc by the transfer of uridine 5-monophosphate (from uridine 5-triphosphate), a reaction catalyzed by the N-terminal domain. The protein is Bifunctional protein GlmU of Pseudomonas aeruginosa (strain LESB58).